The primary structure comprises 689 residues: MNQNFSSMIDRYKYQQLRIGSVSPQQISAWANKILPNGEIVGEVTKPYTFHYKTNKPEKDGLFCERISGPIKSGICACGNYRVIGDEKEGPKFCEQCGVESVDSRIRRYQMGYIKLACPVTHVWYLKRLPSYIANLLDKPLKELEGLVYCDFSFARPIAKKPTFLRLRGSFEYEIQSRKYSIPLFFTTQGFDTFRNREISTGASAIREQLADPDLRIIMDRSLVEWKELGEEGSTGNAWEDRKIGRRKDFLVKRMELAKHFLRTNVEPERMVLCLLPVLPPELRPIIQIDGGKPMSSDINELYRRVIYRNNTLTDPLTTSRSTPGELVLCQEKLVQEAVDTLLDNGIRGQPMRDGHNKVYKSFSDVIEGKEGRFRETLLGKRVDYSGRSVIVVGPSLSLHRCGLPREIAIELFQTFVIRGLIRQRVASNIGIAKSKIREKEPIVWEILQEVMRGHPVLLNRAPTLHRLGIQAFQPIIGEGRAICLHPLVRKGFNADFDGDQMAVHVPLSLEAQTEARLLMFSHMNLLSPAIGDPISVPTQDMLIGLYVLTIGNHRGICANRYNPCNYRNYQNETVDDNNYQYTKEKEPHFCSSYDALGAYRQKRINLYSPLWLRWRLDQRVIASREVPIEVQYESLGTYHEIYGHYQIVRSIKKEILCIYIRTTIGHISFYREIEEAVQGFCRAYSYGT.

Zn(2+) is bound by residues Cys76, Cys78, Cys94, and Cys97. Positions 496, 498, and 500 each coordinate Mg(2+).

Belongs to the RNA polymerase beta' chain family. RpoC1 subfamily. As to quaternary structure, in plastids the minimal PEP RNA polymerase catalytic core is composed of four subunits: alpha, beta, beta', and beta''. When a (nuclear-encoded) sigma factor is associated with the core the holoenzyme is formed, which can initiate transcription. It depends on Mg(2+) as a cofactor. The cofactor is Zn(2+).

The protein resides in the plastid. It localises to the chloroplast. It catalyses the reaction RNA(n) + a ribonucleoside 5'-triphosphate = RNA(n+1) + diphosphate. Functionally, DNA-dependent RNA polymerase catalyzes the transcription of DNA into RNA using the four ribonucleoside triphosphates as substrates. The protein is DNA-directed RNA polymerase subunit beta' of Illicium oligandrum (Star anise).